Reading from the N-terminus, the 220-residue chain is Large ribosomal subunit protein uL3 (220 aa).

The segment at 127-155 (FQGAIKRHGQSRGPMSHSSHFHRAPDSVG) is disordered.

Belongs to the universal ribosomal protein uL3 family. In terms of assembly, part of the 50S ribosomal subunit. Forms a cluster with proteins L14 and L19.

Functionally, one of the primary rRNA binding proteins, it binds directly near the 3'-end of the 23S rRNA, where it nucleates assembly of the 50S subunit. This chain is Large ribosomal subunit protein uL3, found in Staphylococcus aureus (strain JH9).